The chain runs to 433 residues: Serine hydroxymethyltransferase (433 aa).

(6S)-5,6,7,8-tetrahydrofolate is bound by residues leucine 132 and 136-138; that span reads GHL. Lysine 241 bears the N6-(pyridoxal phosphate)lysine mark.

This sequence belongs to the SHMT family. In terms of assembly, homodimer. The cofactor is pyridoxal 5'-phosphate.

The protein localises to the cytoplasm. The enzyme catalyses (6R)-5,10-methylene-5,6,7,8-tetrahydrofolate + glycine + H2O = (6S)-5,6,7,8-tetrahydrofolate + L-serine. It functions in the pathway one-carbon metabolism; tetrahydrofolate interconversion. It participates in amino-acid biosynthesis; glycine biosynthesis; glycine from L-serine: step 1/1. In terms of biological role, catalyzes the reversible interconversion of serine and glycine with tetrahydrofolate (THF) serving as the one-carbon carrier. This reaction serves as the major source of one-carbon groups required for the biosynthesis of purines, thymidylate, methionine, and other important biomolecules. Also exhibits THF-independent aldolase activity toward beta-hydroxyamino acids, producing glycine and aldehydes, via a retro-aldol mechanism. The chain is Serine hydroxymethyltransferase from Rhodopseudomonas palustris (strain BisA53).